The following is a 343-amino-acid chain: Mitochondrial amidoxime-reducing component 1 (343 aa).

Topologically, residues methionine 1–leucine 25 are mitochondrial matrix. A helical; Signal-anchor for type II membrane protein membrane pass occupies residues proline 26–tryptophan 44. Residues arginine 45–glycine 343 are Cytoplasmic-facing. Mo-molybdopterin-binding residues include lysine 69, serine 70, and arginine 94. The interval histidine 95 to phenylalanine 186 is MOSC N-terminal region. The region spanning tyrosine 181–valine 339 is the MOSC domain. 5 residues coordinate Mo-molybdopterin: serine 215, arginine 242, arginine 276, cysteine 277, and tyrosine 321.

The cofactor is Mo-molybdopterin.

It localises to the mitochondrion outer membrane. The protein localises to the membrane. The enzyme catalyses N(omega)-hydroxy-L-arginine + 2 Fe(II)-[cytochrome b5] + 2 H(+) = L-arginine + 2 Fe(III)-[cytochrome b5] + H2O. Catalyzes the reduction of N-oxygenated molecules, acting as a counterpart of cytochrome P450 and flavin-containing monooxygenases in metabolic cycles. As a component of prodrug-converting system, reduces a multitude of N-hydroxylated prodrugs particularly amidoximes, leading to increased drug bioavailability. May be involved in mitochondrial N(omega)-hydroxy-L-arginine (NOHA) reduction, regulating endogenous nitric oxide levels and biosynthesis. Postulated to cleave the N-OH bond of N-hydroxylated substrates in concert with electron transfer from NADH to cytochrome b5 reductase then to cytochrome b5, the ultimate electron donor that primes the active site for substrate reduction. This Xenopus laevis (African clawed frog) protein is Mitochondrial amidoxime-reducing component 1 (mtarc1).